The following is a 465-amino-acid chain: Putative apoptosis inhibitor ORF106 (465 aa).

Residues 291–357 (RECSFSTWPK…MEKETCGWLE (67 aa)) form a BIR repeat. A compositionally biased stretch (acidic residues) spans 373-382 (EGGEDKEEDG). The segment at 373-393 (EGGEDKEEDGGGGGVIEFPKN) is disordered. Residues 405–447 (CKACYERKADIAFIPCGHVFSCNICTMEMFASYKKKKRCPMCR) form an RING-type zinc finger.

In Magallana gigas (Pacific oyster), this protein is Putative apoptosis inhibitor ORF106.